A 319-amino-acid polypeptide reads, in one-letter code: COP9 signalosome complex subunit 6 (319 aa).

The MPN domain occupies 33–166 (VALHPLVILN…VSVYESVIDI (134 aa)).

Belongs to the peptidase M67A family. CSN6 subfamily. Component of the CSN complex, probably composed of cops1, cops2, cops3, cops4, cops5, cops6, cops7, cops8 and cops9.

It is found in the cytoplasm. The protein resides in the nucleus. Functionally, component of the COP9 signalosome complex (CSN), a complex involved in various cellular and developmental processes. The CSN complex is an essential regulator of the ubiquitin (Ubl) conjugation pathway by mediating the deneddylation of the cullin subunits of E3 ligase complexes, leading to modify the Ubl ligase activity. This Xenopus tropicalis (Western clawed frog) protein is COP9 signalosome complex subunit 6 (cops6).